Consider the following 108-residue polypeptide: Small ribosomal subunit protein bS6 (108 aa).

It belongs to the bacterial ribosomal protein bS6 family.

Its function is as follows. Binds together with bS18 to 16S ribosomal RNA. This chain is Small ribosomal subunit protein bS6, found in Dichelobacter nodosus (strain VCS1703A).